The primary structure comprises 169 residues: Crossover junction endodeoxyribonuclease RuvC (169 aa).

Catalysis depends on residues aspartate 11, glutamate 71, and aspartate 143. Mg(2+) contacts are provided by aspartate 11, glutamate 71, and aspartate 143.

This sequence belongs to the RuvC family. In terms of assembly, homodimer which binds Holliday junction (HJ) DNA. The HJ becomes 2-fold symmetrical on binding to RuvC with unstacked arms; it has a different conformation from HJ DNA in complex with RuvA. In the full resolvosome a probable DNA-RuvA(4)-RuvB(12)-RuvC(2) complex forms which resolves the HJ. Mg(2+) is required as a cofactor.

The protein resides in the cytoplasm. The enzyme catalyses Endonucleolytic cleavage at a junction such as a reciprocal single-stranded crossover between two homologous DNA duplexes (Holliday junction).. The RuvA-RuvB-RuvC complex processes Holliday junction (HJ) DNA during genetic recombination and DNA repair. Endonuclease that resolves HJ intermediates. Cleaves cruciform DNA by making single-stranded nicks across the HJ at symmetrical positions within the homologous arms, yielding a 5'-phosphate and a 3'-hydroxyl group; requires a central core of homology in the junction. The consensus cleavage sequence is 5'-(A/T)TT(C/G)-3'. Cleavage occurs on the 3'-side of the TT dinucleotide at the point of strand exchange. HJ branch migration catalyzed by RuvA-RuvB allows RuvC to scan DNA until it finds its consensus sequence, where it cleaves and resolves the cruciform DNA. This Bartonella henselae (strain ATCC 49882 / DSM 28221 / CCUG 30454 / Houston 1) (Rochalimaea henselae) protein is Crossover junction endodeoxyribonuclease RuvC.